The chain runs to 233 residues: tRNA (guanine-N(1)-)-methyltransferase (233 aa).

S-adenosyl-L-methionine is bound by residues Gly-121 and 140-145 (IGDYIL).

Belongs to the RNA methyltransferase TrmD family. As to quaternary structure, homodimer.

It localises to the cytoplasm. The enzyme catalyses guanosine(37) in tRNA + S-adenosyl-L-methionine = N(1)-methylguanosine(37) in tRNA + S-adenosyl-L-homocysteine + H(+). Functionally, specifically methylates guanosine-37 in various tRNAs. In Endomicrobium trichonymphae, this protein is tRNA (guanine-N(1)-)-methyltransferase.